The sequence spans 926 residues: Serine/threonine-protein kinase SIK2 (926 aa).

Residues 20-271 (YDIEGTLGKG…IAQIKEHKWM (252 aa)) enclose the Protein kinase domain. Residue T25 is modified to Phosphothreonine. ATP-binding positions include 26–34 (LGKGNFAVV) and K49. Position 53 is an N6-acetyllysine; by EP300 (K53). D142 functions as the Proton acceptor in the catalytic mechanism. Position 175 is a phosphothreonine; by LKB1 (T175). The region spanning 295-335 (EFNEQVLRLMHSLGIDQQKTIESLQNKSYNHFAAIYFLLVE) is the UBA domain. T484 is subject to Phosphothreonine. Phosphoserine occurs at positions 534 and 587. Low complexity-rich tracts occupy residues 644 to 659 (SSCP…ESVS) and 742 to 756 (SSYP…LPRQ). 3 disordered regions span residues 644-666 (SSCP…ASVH), 742-776 (SSYP…PLSP), and 801-896 (PLPS…SSYD). Polar residues predominate over residues 765–774 (APPFSLTQPL). Over residues 822–834 (QPPPPPPPPPPRQ) the composition is skewed to pro residues.

Belongs to the protein kinase superfamily. CAMK Ser/Thr protein kinase family. SNF1 subfamily. In terms of assembly, interacts with and phosphorylates TORC2/CRTC2. Mg(2+) is required as a cofactor. In terms of processing, phosphorylated at Thr-175 by STK11/LKB1 in complex with STE20-related adapter-alpha (STRADA) pseudo kinase and CAB39. Phosphorylated at Thr-484 in response to insulin in adipocytes. Post-translationally, acetylation at Lys-53 inhibits kinase activity. Deacetylated by HDAC6.

It localises to the cytoplasm. It is found in the endoplasmic reticulum membrane. The catalysed reaction is L-seryl-[protein] + ATP = O-phospho-L-seryl-[protein] + ADP + H(+). It carries out the reaction L-threonyl-[protein] + ATP = O-phospho-L-threonyl-[protein] + ADP + H(+). Activated by phosphorylation on Thr-175. Its function is as follows. Serine/threonine-protein kinase that plays a role in many biological processes such as fatty acid oxidation, autophagy, immune response or glucose metabolism. Phosphorylates 'Ser-794' of IRS1 in insulin-stimulated adipocytes, potentially modulating the efficiency of insulin signal transduction. Inhibits CREB activity by phosphorylating and repressing TORCs, the CREB-specific coactivators. Phosphorylates EP300 and thus inhibits its histone acetyltransferase activity. In turn, regulates the DNA-binding ability of several transcription factors such as PPARA or MLXIPL. Also plays a role in thymic T-cell development. This is Serine/threonine-protein kinase SIK2 (SIK2) from Homo sapiens (Human).